We begin with the raw amino-acid sequence, 268 residues long: Indole-3-glycerol phosphate synthase (268 aa).

Belongs to the TrpC family.

It catalyses the reaction 1-(2-carboxyphenylamino)-1-deoxy-D-ribulose 5-phosphate + H(+) = (1S,2R)-1-C-(indol-3-yl)glycerol 3-phosphate + CO2 + H2O. It participates in amino-acid biosynthesis; L-tryptophan biosynthesis; L-tryptophan from chorismate: step 4/5. The protein is Indole-3-glycerol phosphate synthase of Micrococcus luteus (strain ATCC 4698 / DSM 20030 / JCM 1464 / CCM 169 / CCUG 5858 / IAM 1056 / NBRC 3333 / NCIMB 9278 / NCTC 2665 / VKM Ac-2230) (Micrococcus lysodeikticus).